The sequence spans 238 residues: Proenkephalin-A (238 aa).

An N-terminal signal peptide occupies residues 1-25; it reads MAASALSTCLWMLVLGTCVSLVVGT. Disulfide bonds link cysteine 27–cysteine 50, cysteine 31–cysteine 54, and cysteine 34–cysteine 66. The interval 76–103 is disordered; it reads QSPLASQQDQERVDAMMADEEDATSPEH. Propeptides lie at residues 124 to 167, 177 to 195, and 206 to 230; these read SSAS…AEAV, ADRG…GRVL, and VGRP…SELQ.

It belongs to the opioid neuropeptide precursor family. Expressed by the venom gland. Moderately expressed in the venom gland transcriptome.

The protein localises to the secreted. Its function is as follows. Met-enkephalins compete with and mimic the effects of opiate drugs. They play a role in a number of physiologic functions, including pain perception and responses to stress. Enkephalin peptides found in Meiacanthus fangblennies induce physiological effects via their interaction with delta-type opioid receptors (OPRD1) (tested on M.grammistes). Therefore, finding a proenkephalin sequence in M.atrodorsalis venom suggests that this protein act in the same manner. This Meiacanthus atrodorsalis (Forktail blenny) protein is Proenkephalin-A.